A 288-amino-acid polypeptide reads, in one-letter code: Bifunctional protein FolD (288 aa).

Residues 166–168 (GAS) and isoleucine 232 each bind NADP(+).

The protein belongs to the tetrahydrofolate dehydrogenase/cyclohydrolase family. Homodimer.

It carries out the reaction (6R)-5,10-methylene-5,6,7,8-tetrahydrofolate + NADP(+) = (6R)-5,10-methenyltetrahydrofolate + NADPH. The catalysed reaction is (6R)-5,10-methenyltetrahydrofolate + H2O = (6R)-10-formyltetrahydrofolate + H(+). Its pathway is one-carbon metabolism; tetrahydrofolate interconversion. Its function is as follows. Catalyzes the oxidation of 5,10-methylenetetrahydrofolate to 5,10-methenyltetrahydrofolate and then the hydrolysis of 5,10-methenyltetrahydrofolate to 10-formyltetrahydrofolate. This is Bifunctional protein FolD from Salmonella arizonae (strain ATCC BAA-731 / CDC346-86 / RSK2980).